The primary structure comprises 231 residues: Ribose-5-phosphate isomerase A (231 aa).

Substrate contacts are provided by residues 32-35 (TGST), 85-88 (DGAD), and 98-101 (KGGG). The Proton acceptor role is filled by E107. K125 provides a ligand contact to substrate.

Belongs to the ribose 5-phosphate isomerase family. Homodimer.

It carries out the reaction aldehydo-D-ribose 5-phosphate = D-ribulose 5-phosphate. It participates in carbohydrate degradation; pentose phosphate pathway; D-ribose 5-phosphate from D-ribulose 5-phosphate (non-oxidative stage): step 1/1. In terms of biological role, catalyzes the reversible conversion of ribose-5-phosphate to ribulose 5-phosphate. The polypeptide is Ribose-5-phosphate isomerase A (Burkholderia cenocepacia (strain ATCC BAA-245 / DSM 16553 / LMG 16656 / NCTC 13227 / J2315 / CF5610) (Burkholderia cepacia (strain J2315))).